The sequence spans 236 residues: UPF0502 protein BamMC406_5439 (236 aa).

It belongs to the UPF0502 family.

In Burkholderia ambifaria (strain MC40-6), this protein is UPF0502 protein BamMC406_5439.